Here is a 509-residue protein sequence, read N- to C-terminus: Movement protein (509 aa).

The protein localises to the host cell junction. It localises to the host plasmodesma. It is found in the host cytoplasm. Transports viral genome to neighboring plant cells directly through plasmosdesmata, without any budding. The movement protein allows efficient cell to cell propagation, by bypassing the host cell wall barrier. Increases virus accumulation and symptom severity. This is Movement protein from Rice dwarf virus (isolate Akita) (RDV).